Here is an 83-residue protein sequence, read N- to C-terminus: Host transcription reprogramming factor 9 (83 aa).

The N-terminal stretch at 1–19 (MQFSKITLAIVLYALGTAA) is a signal peptide. The C2H2-type zinc finger occupies 54–77 (YRCDKCEKEFVKGNDFFNHGGRGH).

It is found in the secreted. It localises to the host nucleus. Its function is as follows. Probable secreted effector that translocates into the nuclei of host cells to reprogram the expression of targeted genes by binding on effector binding elements in rice. This chain is Host transcription reprogramming factor 9, found in Pyricularia oryzae (strain 70-15 / ATCC MYA-4617 / FGSC 8958) (Rice blast fungus).